A 146-amino-acid chain; its full sequence is Large ribosomal subunit protein uL15 (146 aa).

Residues 1 to 54 (MKLHELRPAAGSKSAPKRVGRGTGSGLGRNAGKGEKGQNARSGGGVRPGFEGGQ) are disordered. Gly residues-rich tracts occupy residues 21–31 (RGTGSGLGRNA) and 42–52 (SGGGVRPGFEG).

The protein belongs to the universal ribosomal protein uL15 family. In terms of assembly, part of the 50S ribosomal subunit.

Binds to the 23S rRNA. In Clostridium perfringens (strain ATCC 13124 / DSM 756 / JCM 1290 / NCIMB 6125 / NCTC 8237 / Type A), this protein is Large ribosomal subunit protein uL15.